The primary structure comprises 1396 residues: uncharacterized protein (1396 aa).

88–95 serves as a coordination point for ATP; sequence AYKKWGRS. Disordered stretches follow at residues 146–165 and 198–388; these read EKIH…LSPT and KPCS…VKDL. A compositionally biased stretch (low complexity) spans 198 to 221; it reads KPCSYSSSSSSSTVPPASTDTSSP. Over residues 242–268 the composition is skewed to basic and acidic residues; sequence MHEKAQSRSRHEKESKLSSSTIEEKPA. The segment covering 286 to 300 has biased composition (low complexity); that stretch reads SWSSGSSEAGSSSSG. Positions 312–327 are enriched in basic residues; it reads VKVRHKAREIRNRKGR. A phosphoserine mark is found at serine 817 and serine 1083. The segment at 1113 to 1137 is disordered; it reads PISASELSPGGGSESEFESEKDEAS. Phosphoserine occurs at positions 1197 and 1339. The disordered stretch occupies residues 1347–1396; sequence TGERGSETKPNGLHRKMCSSASSDTGDTGSEAGGEWVGPSREELFSRTHL. A compositionally biased stretch (low complexity) spans 1365–1376; it reads SSASSDTGDTGS. Residues 1386–1396 are compositionally biased toward basic and acidic residues; the sequence is SREELFSRTHL.

This is an uncharacterized protein from Mus musculus (Mouse).